Here is a 150-residue protein sequence, read N- to C-terminus: Peptidoglycan-associated lipoprotein (150 aa).

The first 19 residues, 1–19 (MKKLTKVLLVAGSVAVLAA), serve as a signal peptide directing secretion. Cys-20 is lipidated: N-palmitoyl cysteine. Residue Cys-20 is the site of S-diacylglycerol cysteine attachment. Residues 37–150 (SVQDLQQRYN…SKNRRAVLAY (114 aa)) form the OmpA-like domain.

Belongs to the Pal lipoprotein family. As to quaternary structure, the Tol-Pal system is composed of five core proteins: the inner membrane proteins TolA, TolQ and TolR, the periplasmic protein TolB and the outer membrane protein Pal. They form a network linking the inner and outer membranes and the peptidoglycan layer.

It localises to the cell outer membrane. Its function is as follows. Part of the Tol-Pal system, which plays a role in outer membrane invagination during cell division and is important for maintaining outer membrane integrity. The polypeptide is Peptidoglycan-associated lipoprotein (Pasteurella multocida (strain Pm70)).